A 63-amino-acid chain; its full sequence is MEVYSDRQLAKDQAARLRQGFSAYAETNSLASLIKKELQSHNLQVYEDLTDFGCWFIPVTDEH.

This is an uncharacterized protein from Bacillus subtilis (strain 168).